Consider the following 180-residue polypeptide: Ribulose bisphosphate carboxylase small subunit, chloroplastic (180 aa).

The transit peptide at 1–56 (MASSVLSSAAVATRSNVAQANMVAPFTGLKSAASFPVSRKQNLDITSIASNGGRVQ) directs the protein to the chloroplast.

Belongs to the RuBisCO small chain family. As to quaternary structure, heterohexadecamer of 8 large and 8 small subunits. (Microbial infection) Binds to tobamovirus movement protein at the plasmodesmata (e.g. tomato mosaic virus MP AC P69513); this interaction seems required for viral systemic movement.

It is found in the plastid. Its subcellular location is the chloroplast. It localises to the cell junction. The protein resides in the plasmodesma. RuBisCO catalyzes two reactions: the carboxylation of D-ribulose 1,5-bisphosphate, the primary event in carbon dioxide fixation, as well as the oxidative fragmentation of the pentose substrate. Both reactions occur simultaneously and in competition at the same active site. Although the small subunit is not catalytic it is essential for maximal activity. Involved in antiviral defenses. Its function is as follows. (Microbial infection) Required for tobamovirus movement (e.g. tobacco mosaic virus (TMV)). The sequence is that of Ribulose bisphosphate carboxylase small subunit, chloroplastic from Nicotiana benthamiana.